We begin with the raw amino-acid sequence, 281 residues long: Probable endonuclease 4 (281 aa).

9 residues coordinate Zn(2+): histidine 69, histidine 109, glutamate 145, aspartate 179, histidine 182, histidine 216, aspartate 229, histidine 231, and glutamate 261.

It belongs to the AP endonuclease 2 family. The cofactor is Zn(2+).

The enzyme catalyses Endonucleolytic cleavage to 5'-phosphooligonucleotide end-products.. Functionally, endonuclease IV plays a role in DNA repair. It cleaves phosphodiester bonds at apurinic or apyrimidinic (AP) sites, generating a 3'-hydroxyl group and a 5'-terminal sugar phosphate. In Pectobacterium carotovorum subsp. carotovorum (strain PC1), this protein is Probable endonuclease 4.